A 500-amino-acid chain; its full sequence is Carnosic acid synthase (500 aa).

A helical transmembrane segment spans residues 4–24 (LILLSLAFLASCVVAYSRRRP). Residue cysteine 443 participates in heme binding.

Belongs to the cytochrome P450 family. The cofactor is heme. Expressed in leaf glandular trichomes.

It is found in the membrane. It carries out the reaction 11-hydroxyferruginol + 3 reduced [NADPH--hemoprotein reductase] + 3 O2 = carnosate + 3 oxidized [NADPH--hemoprotein reductase] + 4 H2O + 4 H(+). It catalyses the reaction miltiradiene + 2 reduced [NADPH--hemoprotein reductase] + 2 O2 = miltiradien-20-al + 2 oxidized [NADPH--hemoprotein reductase] + 3 H2O + 2 H(+). The catalysed reaction is ferruginol + 3 reduced [NADPH--hemoprotein reductase] + 3 O2 = pisiferate + 3 oxidized [NADPH--hemoprotein reductase] + 4 H2O + 4 H(+). It participates in secondary metabolite biosynthesis; terpenoid biosynthesis. Functionally, monooxygenase involved in the biosynthesis of carnosate, a potent antioxidant labdane-related diterpene natural product. Catalyzes the oxidation of 11-hydroxyferruginol to produce carnosate. Mediates the conversion of miltiradien into miltiradien-20-al. Also involved in the production of pisiferic acid and derivative products from ferruginol. The sequence is that of Carnosic acid synthase from Salvia pomifera (Apple sage).